A 32-amino-acid polypeptide reads, in one-letter code: ilv operon leader peptide (32 aa).

In Escherichia coli O157:H7, this protein is ilv operon leader peptide (ilvL).